Consider the following 503-residue polypeptide: Zinc-regulated transporter 3 (503 aa).

3 helical membrane-spanning segments follow: residues 8–28, 42–62, and 75–95; these read LLFS…VPLL, LVNY…LYML, and FPGL…VHAF. Residues 112 to 171 are disordered; sequence GSHIHSKSHSHSHSHSHADSHSNFSNDHDLENAPSEHGYATSSSSVSENDPLITKDSDRP. A compositionally biased stretch (basic residues) spans 115 to 126; it reads IHSKSHSHSHSH. A compositionally biased stretch (basic and acidic residues) spans 127–142; sequence SHADSHSNFSNDHDLE. Phosphoserine occurs at positions 178 and 188. Disordered stretches follow at residues 221–244 and 274–295; these read QSER…DKDH and HHSS…FSSP. Residues 280-295 are compositionally biased toward polar residues; it reads PENYGSNQLSHSFSSP. The next 5 membrane-spanning stretches (helical) occupy residues 336–356, 371–391, 398–418, 438–458, and 482–502; these read IGMQ…FIIF, IFLS…LPFY, WVAI…GALI, LLSV…QTGI, and GTTC…SALF.

It belongs to the ZIP transporter (TC 2.A.5) family.

It localises to the vacuole membrane. Its function is as follows. Transports zinc from storage in the vacuole to the cytoplasm. The polypeptide is Zinc-regulated transporter 3 (ZRT3) (Saccharomyces cerevisiae (strain ATCC 204508 / S288c) (Baker's yeast)).